The following is an 881-amino-acid chain: Ent-kaurene synthase CPS/KS, chloroplastic (881 aa).

The N-terminal 41 residues, 1–41 (MASSTLIQNRSCGVTSSMSSFQIFRGQPLRFPGTRTPAAVQ), are a transit peptide targeting the chloroplast. Mg(2+) is bound by residues aspartate 417, aspartate 419, aspartate 635, aspartate 639, asparagine 778, aspartate 779, and glutamate 786. A DXDDTA motif motif is present at residues 417 to 422 (DVDDTA). A DDXXD motif motif is present at residues 635 to 639 (DDYFD).

Belongs to the terpene synthase family. Requires Mg(2+) as cofactor.

Its subcellular location is the plastid. The protein resides in the chloroplast. It carries out the reaction (2E,6E,10E)-geranylgeranyl diphosphate = ent-copalyl diphosphate. The catalysed reaction is ent-copalyl diphosphate = ent-kaur-16-ene + diphosphate. It catalyses the reaction ent-copalyl diphosphate = ent-beyerene + diphosphate. The enzyme catalyses ent-copalyl diphosphate = ent-sandaracopimara-8(14),15-diene + diphosphate. It carries out the reaction ent-copalyl diphosphate = ent-isokaurene + diphosphate. The catalysed reaction is ent-copalyl diphosphate + H2O = 16alpha-hydroxy-ent-kaurene + diphosphate. It functions in the pathway secondary metabolite biosynthesis; terpenoid biosynthesis. Bifunctional copalyl diphosphate/kaurene synthase involved in the biosynthesis of labdane-related diterpenoids (LRDs) natural products such as ent-beyerene, an antimicrobial compound. Supports the conversion of geranylgeranyl diphosphate (GGPP) to ent-copalyl diphosphate (ent-CDP). Also catalyzes the subsequent cyclization of ent-CDP into many diterpenes, including ent-kaur-16-ene as the major product, and ent-beyerene, ent-sandaracopimaradiene, ent-kaur-15-ene (ent-isokaurene) and 16-hydroxy-ent-kaurene (ent-16-alpha-hydroxy-kaurene) as minor products. This chain is Ent-kaurene synthase CPS/KS, chloroplastic, found in Physcomitrium patens (Spreading-leaved earth moss).